Here is a 293-residue protein sequence, read N- to C-terminus: 4-hydroxy-tetrahydrodipicolinate synthase (293 aa).

Threonine 44 provides a ligand contact to pyruvate. The active-site Proton donor/acceptor is the tyrosine 132. Lysine 160 serves as the catalytic Schiff-base intermediate with substrate. A pyruvate-binding site is contributed by isoleucine 202.

Belongs to the DapA family. Homotetramer; dimer of dimers.

It is found in the cytoplasm. It catalyses the reaction L-aspartate 4-semialdehyde + pyruvate = (2S,4S)-4-hydroxy-2,3,4,5-tetrahydrodipicolinate + H2O + H(+). It participates in amino-acid biosynthesis; L-lysine biosynthesis via DAP pathway; (S)-tetrahydrodipicolinate from L-aspartate: step 3/4. In terms of biological role, catalyzes the condensation of (S)-aspartate-beta-semialdehyde [(S)-ASA] and pyruvate to 4-hydroxy-tetrahydrodipicolinate (HTPA). The polypeptide is 4-hydroxy-tetrahydrodipicolinate synthase (Pelagibacter ubique (strain HTCC1062)).